The sequence spans 308 residues: Extended-spectrum beta-lactamase PER-1 (308 aa).

Residues 1 to 26 (MNVIIKAVVTASTLLMVSFSSFETSA) form the signal peptide. The Nucleophile; acyl-ester intermediate role is filled by serine 71. 3 residues coordinate a beta-lactam: lysine 74, serine 135, and glutamate 171.

It belongs to the class-A beta-lactamase family. In terms of assembly, monomer.

It localises to the secreted. The catalysed reaction is a beta-lactam + H2O = a substituted beta-amino acid. With respect to regulation, inhibited by the beta-lactamase-blocking agents clavulanic acid, tazobactam and sulbactam. Not inhibited by EDTA. Functionally, extended-spectrum beta-lactamase (ESBL) which confers resistance to penicillins, as well as first-, second- and third-generation cephalosporins, but not the carbapenem, imipenem, in the JM109 strain of E.coli. Has cefotaxime-hydrolyzing activity. This Pseudomonas aeruginosa protein is Extended-spectrum beta-lactamase PER-1.